The chain runs to 290 residues: ATP synthase gamma chain (290 aa).

This sequence belongs to the ATPase gamma chain family. F-type ATPases have 2 components, CF(1) - the catalytic core - and CF(0) - the membrane proton channel. CF(1) has five subunits: alpha(3), beta(3), gamma(1), delta(1), epsilon(1). CF(0) has three main subunits: a, b and c.

The protein localises to the cell inner membrane. Its function is as follows. Produces ATP from ADP in the presence of a proton gradient across the membrane. The gamma chain is believed to be important in regulating ATPase activity and the flow of protons through the CF(0) complex. In Thiobacillus denitrificans (strain ATCC 25259 / T1), this protein is ATP synthase gamma chain.